Reading from the N-terminus, the 200-residue chain is A-type ATP synthase subunit E (200 aa).

This sequence belongs to the V-ATPase E subunit family. In terms of assembly, has multiple subunits with at least A(3), B(3), C, D, E, F, H, I and proteolipid K(x).

The protein resides in the cell membrane. In terms of biological role, component of the A-type ATP synthase that produces ATP from ADP in the presence of a proton gradient across the membrane. This is A-type ATP synthase subunit E from Methanopyrus kandleri (strain AV19 / DSM 6324 / JCM 9639 / NBRC 100938).